A 73-amino-acid chain; its full sequence is MAKEELVEFGGKVSEVLPDNRFRVILENGFEVWAYSSGRLKKNRIRVLAGDRVTLEMSPYDLTKGRINYRHKS.

In terms of domain architecture, S1-like spans 1–72 (MAKEELVEFG…TKGRINYRHK (72 aa)).

The protein belongs to the IF-1 family. In terms of assembly, component of the 30S ribosomal translation pre-initiation complex which assembles on the 30S ribosome in the order IF-2 and IF-3, IF-1 and N-formylmethionyl-tRNA(fMet); mRNA recruitment can occur at any time during PIC assembly.

It localises to the cytoplasm. Functionally, one of the essential components for the initiation of protein synthesis. Stabilizes the binding of IF-2 and IF-3 on the 30S subunit to which N-formylmethionyl-tRNA(fMet) subsequently binds. Helps modulate mRNA selection, yielding the 30S pre-initiation complex (PIC). Upon addition of the 50S ribosomal subunit IF-1, IF-2 and IF-3 are released leaving the mature 70S translation initiation complex. The polypeptide is Translation initiation factor IF-1 3 (Cupriavidus metallidurans (strain ATCC 43123 / DSM 2839 / NBRC 102507 / CH34) (Ralstonia metallidurans)).